The chain runs to 286 residues: General stress protein 39 (286 aa).

The segment at 1–26 (MANYPKELPAQTQSRQPGIESEMNPS) is disordered. Residue 46 to 70 (LITGGDSGIGRAVSVAYAKEGADIA) participates in NAD(+) binding. A substrate-binding site is contributed by S178. The Proton acceptor role is filled by Y191.

It belongs to the short-chain dehydrogenases/reductases (SDR) family.

In Bacillus subtilis (strain 168), this protein is General stress protein 39 (ydaD).